The chain runs to 252 residues: Homeobox protein EMX2 (252 aa).

Positions 154–213 form a DNA-binding region, homeobox; sequence PKRIRTAFSPSQLLRLEHAFEKNHYVVGAERKQLAHSLSLTETQVKVWFQNRRTKFKRQK. The interval 212 to 252 is disordered; it reads QKLEEEGSDSQQKKKGTHHINRWRIATKQASPEEIDVTSDD. The segment covering 224 to 233 has biased composition (basic residues); it reads KKKGTHHINR.

The protein belongs to the EMX homeobox family. As to quaternary structure, interacts with translation initiation factor EIF4E. As to expression, cerebral cortex.

It is found in the nucleus. The protein resides in the cell projection. It localises to the axon. Transcription factor, which in cooperation with EMX1, acts to generate the boundary between the roof and archipallium in the developing brain. May function in combination with OTX1/2 to specify cell fates in the developing central nervous system. In the inner ear, it controls the distribution of GPR156 at hair cell boundaries, and regulates the organization of stereociliary bundles in opposite orientations across the line of polarity reversal (LPR). The chain is Homeobox protein EMX2 (EMX2) from Homo sapiens (Human).